Here is a 407-residue protein sequence, read N- to C-terminus: uncharacterized protein (407 aa).

Residues 10–37 are a coiled coil; sequence DKLEQLANDVVTELTDMENKYKDLHVEL.

This is an uncharacterized protein from Bacillus subtilis (strain 168).